A 251-amino-acid polypeptide reads, in one-letter code: MKIFSWVANKISGKQEANRFPANSSAPYRANVSDCRKDEFSDWPQSLLAIGTFGNKQIEEVAQVENSSDNVQSVQDTVKFTEEEVDKIRKEFETLLAIKDQAEAQRSHDDDQVGLQKRADGEDNEKHIRQLINKRIIVSKSKNSLGKKGNTLKPRSVASLLKLFMCKGGFTSVVPEPRNTFPQSRMEKLLKAILQKKIHPQNSSTLVAKRHLDWKPDETEINECLEDALRDLDDDGAKWVKTDSEYIVLEM.

Residues 46–52 (SLLAIGT) carry the IGT motif motif. The stretch at 64–105 (VENSSDNVQSVQDTVKFTEEEVDKIRKEFETLLAIKDQAEAQ) forms a coiled coil.

The protein belongs to the LAZY family.

Involved in the control of root growth angle. Involved in cell elongation in the root tip that causes asymmetric root growth and downward bending of the root in response to gravity. The protein is Protein DEEPER ROOTING 1 of Oryza sativa subsp. japonica (Rice).